The primary structure comprises 507 residues: Maturase K (507 aa).

Belongs to the intron maturase 2 family. MatK subfamily.

It localises to the plastid. Its subcellular location is the chloroplast. Usually encoded in the trnK tRNA gene intron. Probably assists in splicing its own and other chloroplast group II introns. The polypeptide is Maturase K (Magnolia champaca (Yellow jade orchid tree)).